The following is a 125-amino-acid chain: Small ribosomal subunit protein uS12 (125 aa).

The residue at position 89 (D89) is a 3-methylthioaspartic acid.

The protein belongs to the universal ribosomal protein uS12 family. As to quaternary structure, part of the 30S ribosomal subunit. Contacts proteins S8 and S17. May interact with IF1 in the 30S initiation complex.

Its function is as follows. With S4 and S5 plays an important role in translational accuracy. Functionally, interacts with and stabilizes bases of the 16S rRNA that are involved in tRNA selection in the A site and with the mRNA backbone. Located at the interface of the 30S and 50S subunits, it traverses the body of the 30S subunit contacting proteins on the other side and probably holding the rRNA structure together. The combined cluster of proteins S8, S12 and S17 appears to hold together the shoulder and platform of the 30S subunit. The protein is Small ribosomal subunit protein uS12 of Clostridium novyi (strain NT).